The sequence spans 209 residues: Protein GrpE (209 aa).

Positions 1–63 (MKKSRKKENM…NPEEACREEN (63 aa)) are disordered. 2 stretches are compositionally biased toward basic and acidic residues: residues 7-42 (KENMDSKERNQKEAERSEARNSESPAEKAGETKVSP) and 50-63 (EAEKNPEEACREEN).

The protein belongs to the GrpE family. Homodimer.

It localises to the cytoplasm. Functionally, participates actively in the response to hyperosmotic and heat shock by preventing the aggregation of stress-denatured proteins, in association with DnaK and GrpE. It is the nucleotide exchange factor for DnaK and may function as a thermosensor. Unfolded proteins bind initially to DnaJ; upon interaction with the DnaJ-bound protein, DnaK hydrolyzes its bound ATP, resulting in the formation of a stable complex. GrpE releases ADP from DnaK; ATP binding to DnaK triggers the release of the substrate protein, thus completing the reaction cycle. Several rounds of ATP-dependent interactions between DnaJ, DnaK and GrpE are required for fully efficient folding. The chain is Protein GrpE from Methanosarcina mazei (strain ATCC BAA-159 / DSM 3647 / Goe1 / Go1 / JCM 11833 / OCM 88) (Methanosarcina frisia).